Consider the following 836-residue polypeptide: Glutamate receptor ionotropic, kainate 1 (836 aa).

A signal peptide spans 1-30; that stretch reads MERGTVLIQPGLWTRDTSWTLLYFLCYILP. Residues 31-561 lie on the Extracellular side of the membrane; that stretch reads QTSPQVLRIG…VFSFLNPLSP (531 aa). N-linked (GlcNAc...) asparagine glycosylation is found at Asn68, Asn74, Asn276, Asn379, Asn413, Asn424, and Asn431. L-glutamate-binding residues include Pro516, Thr518, and Arg523. Asn546 carries N-linked (GlcNAc...) asparagine glycosylation. The chain crosses the membrane as a helical span at residues 562 to 582; the sequence is DIWMYVLLACLGVSCVLFVIA. The Cytoplasmic segment spans residues 583–638; sequence RFTPYEWYNPHPCNPDSDVVENNFTLLNSFWFGVGALMQQGSELMPKALSTRIVGG. A helical membrane pass occupies residues 639–659; the sequence is IWWFFTLIIISSYTANLAAFL. Residues 660-721 lie on the Extracellular side of the membrane; sequence TVERMESPID…RQPSALGVEN (62 aa). Ser689 and Thr690 together coordinate L-glutamate. A helical membrane pass occupies residues 722 to 742; that stretch reads IGGIFIVLAAGLVLSVFVAIG. The Cytoplasmic segment spans residues 743-836; that stretch reads EFIYKSRKNN…RRTQRKETVA (94 aa).

Belongs to the glutamate-gated ion channel (TC 1.A.10.1) family. GRIK1 subfamily. As to quaternary structure, homotetramer or heterotetramer of pore-forming glutamate receptor subunits. Tetramers may be formed by the dimerization of dimers. Can form functional heteromeric receptors with GRIK4 and GRIK5. Interacts with KLHL17. As to expression, most abundant in the cerebellum. Also present in the suprachiasmatic nuclei of the hypothalamus.

It localises to the cell membrane. It is found in the postsynaptic cell membrane. It catalyses the reaction Ca(2+)(in) = Ca(2+)(out). In terms of biological role, ionotropic glutamate receptor that functions as a cation-permeable ligand-gated ion channel, gated by L-glutamate and the glutamatergic agonist kainic acid. L-glutamate acts as an excitatory neurotransmitter at many synapses in the central nervous system. Binding of the excitatory neurotransmitter L-glutamate induces a conformation change, leading to the opening of the cation channel, and thereby converts the chemical signal to an electrical impulse. The receptor then desensitizes rapidly and enters a transient inactive state, characterized by the presence of bound agonist. This Mus musculus (Mouse) protein is Glutamate receptor ionotropic, kainate 1 (Grik1).